The sequence spans 743 residues: Catalase-peroxidase (743 aa).

The segment at 1–21 (MSENHETVVSELNEESGGGCP) is disordered. Residues 108–231 (WHSAGTYRIS…LGAVQMGLIY (124 aa)) constitute a cross-link (tryptophyl-tyrosyl-methioninium (Trp-Tyr) (with M-257)). Catalysis depends on His109, which acts as the Proton acceptor. Positions 231–257 (YVNPEGPNGTPDPLAAARDIRETFRRM) form a cross-link, tryptophyl-tyrosyl-methioninium (Tyr-Met) (with W-108). A heme b-binding site is contributed by His272. The disordered stretch occupies residues 275 to 296 (GKTHGAGDPDNVGPEPEGAPLE).

It belongs to the peroxidase family. Peroxidase/catalase subfamily. In terms of assembly, homodimer or homotetramer. The cofactor is heme b. Formation of the three residue Trp-Tyr-Met cross-link is important for the catalase, but not the peroxidase activity of the enzyme.

It catalyses the reaction H2O2 + AH2 = A + 2 H2O. The enzyme catalyses 2 H2O2 = O2 + 2 H2O. Bifunctional enzyme with both catalase and broad-spectrum peroxidase activity. This chain is Catalase-peroxidase, found in Parafrankia sp. (strain EAN1pec).